Reading from the N-terminus, the 82-residue chain is uncharacterized protein (82 aa).

This sequence to M.thermoautotrophicum MTH386.

This is an uncharacterized protein from Methanocaldococcus jannaschii (strain ATCC 43067 / DSM 2661 / JAL-1 / JCM 10045 / NBRC 100440) (Methanococcus jannaschii).